Reading from the N-terminus, the 170-residue chain is Protein SprT (170 aa).

The region spanning leucine 22–isoleucine 165 is the SprT-like domain. A Zn(2+)-binding site is contributed by histidine 78. Residue glutamate 79 is part of the active site. Histidine 82 is a Zn(2+) binding site.

The protein belongs to the SprT family. Zn(2+) serves as cofactor.

It localises to the cytoplasm. This chain is Protein SprT, found in Yersinia pseudotuberculosis serotype IB (strain PB1/+).